The sequence spans 523 residues: Occludin (523 aa).

Residues Met1–Asn20 are disordered. Topologically, residues Met1–Arg66 are cytoplasmic. The region spanning Ser60–Arg269 is the MARVEL domain. Residues Ile67 to Leu87 traverse the membrane as a helical segment. The Extracellular segment spans residues Ala88 to Phe140. The helical transmembrane segment at Leu141 to Ile161 threads the bilayer. Residues Arg162–Leu173 are Cytoplasmic-facing. The chain crosses the membrane as a helical span at residues Ile174–Ile194. Topologically, residues Met195–Ala244 are extracellular. Cys216 and Cys237 are joined by a disulfide. A helical membrane pass occupies residues Ile245–Val265. Over Lys266–Thr523 the chain is Cytoplasmic. At Ser302 the chain carries Phosphoserine. The tract at residues Ser302–Pro338 is disordered. Residue Thr305 is modified to Phosphothreonine. Phosphoserine is present on residues Ser313, Ser321, Ser340, and Ser360. Residues Asp363 to Glu408 form a disordered region. The span at Arg368–Arg381 shows a compositional bias: polar residues. Tyr369 carries the phosphotyrosine modification. Ser370 and Ser371 each carry phosphoserine. The segment covering Thr382–Ala391 has biased composition (basic residues). The span at Lys392–Thr401 shows a compositional bias: basic and acidic residues. Phosphotyrosine occurs at positions 399 and 403. Thr404 and Thr405 each carry phosphothreonine; by PKC/PRKCH. The residue at position 409 (Ser409) is a Phosphoserine. One can recognise an OCEL domain in the interval Glu415–Thr523. Positions Tyr433–Lys489 form a coiled coil. A Phosphoserine modification is found at Ser491.

This sequence belongs to the ELL/occludin family. In terms of assembly, interacts with TJP1/ZO1. Interacts with VAPA. Interacts with CLDN1, CLDN6, CLDN9, CLDN11, CLDN12 and CLDN17. Interacts with PLSCR1. Interacts with LSR, ILDR1 and ILDR2. Interacts with TJP2/ZO2. Post-translationally, dephosphorylated by PTPRJ.

It is found in the cell membrane. The protein resides in the cell junction. It localises to the tight junction. Functionally, may play a role in the formation and regulation of the tight junction (TJ) paracellular permeability barrier. May be involved in the organization of actin in endothelial cells. This Rattus norvegicus (Rat) protein is Occludin (Ocln).